Here is a 122-residue protein sequence, read N- to C-terminus: Large ribosomal subunit protein uL14c (122 aa).

It belongs to the universal ribosomal protein uL14 family. As to quaternary structure, part of the 50S ribosomal subunit.

It is found in the plastid. The protein resides in the chloroplast. In terms of biological role, binds to 23S rRNA. The chain is Large ribosomal subunit protein uL14c from Guizotia abyssinica (Niger).